We begin with the raw amino-acid sequence, 334 residues long: Anthranilate phosphoribosyltransferase (334 aa).

5-phospho-alpha-D-ribose 1-diphosphate contacts are provided by residues Gly79, 82–83 (GD), Ser87, 89–92 (NIST), 107–115 (KAGNRSISS), and Ser119. Gly79 is a binding site for anthranilate. Position 91 (Ser91) interacts with Mg(2+). Residue Asn110 participates in anthranilate binding. Anthranilate is bound at residue Arg165. Mg(2+) contacts are provided by Asp224 and Glu225.

This sequence belongs to the anthranilate phosphoribosyltransferase family. As to quaternary structure, homodimer. Requires Mg(2+) as cofactor.

It carries out the reaction N-(5-phospho-beta-D-ribosyl)anthranilate + diphosphate = 5-phospho-alpha-D-ribose 1-diphosphate + anthranilate. It participates in amino-acid biosynthesis; L-tryptophan biosynthesis; L-tryptophan from chorismate: step 2/5. In terms of biological role, catalyzes the transfer of the phosphoribosyl group of 5-phosphorylribose-1-pyrophosphate (PRPP) to anthranilate to yield N-(5'-phosphoribosyl)-anthranilate (PRA). The chain is Anthranilate phosphoribosyltransferase from Streptococcus thermophilus (strain ATCC BAA-250 / LMG 18311).